Consider the following 723-residue polypeptide: Fatty acid oxidation complex subunit alpha (723 aa).

Positions 1–189 (MIYQAETLQV…KIGLLDAVVD (189 aa)) are enoyl-CoA hydratase/isomerase. Residue aspartate 296 coordinates substrate. Positions 311–723 (NKETQRAAVL…FYGAQQQGSI (413 aa)) are 3-hydroxyacyl-CoA dehydrogenase. NAD(+) is bound by residues methionine 325, aspartate 344, 401–403 (VVE), lysine 408, and serine 430. The For 3-hydroxyacyl-CoA dehydrogenase activity role is filled by histidine 451. Residue asparagine 454 coordinates NAD(+). Residues asparagine 501 and tyrosine 661 each coordinate substrate.

This sequence in the N-terminal section; belongs to the enoyl-CoA hydratase/isomerase family. It in the C-terminal section; belongs to the 3-hydroxyacyl-CoA dehydrogenase family. Heterotetramer of two alpha chains (FadB) and two beta chains (FadA).

It catalyses the reaction a (3S)-3-hydroxyacyl-CoA + NAD(+) = a 3-oxoacyl-CoA + NADH + H(+). It carries out the reaction a (3S)-3-hydroxyacyl-CoA = a (2E)-enoyl-CoA + H2O. The catalysed reaction is a 4-saturated-(3S)-3-hydroxyacyl-CoA = a (3E)-enoyl-CoA + H2O. The enzyme catalyses (3S)-3-hydroxybutanoyl-CoA = (3R)-3-hydroxybutanoyl-CoA. It catalyses the reaction a (3Z)-enoyl-CoA = a 4-saturated (2E)-enoyl-CoA. It carries out the reaction a (3E)-enoyl-CoA = a 4-saturated (2E)-enoyl-CoA. It participates in lipid metabolism; fatty acid beta-oxidation. In terms of biological role, involved in the aerobic and anaerobic degradation of long-chain fatty acids via beta-oxidation cycle. Catalyzes the formation of 3-oxoacyl-CoA from enoyl-CoA via L-3-hydroxyacyl-CoA. It can also use D-3-hydroxyacyl-CoA and cis-3-enoyl-CoA as substrate. The chain is Fatty acid oxidation complex subunit alpha from Vibrio vulnificus (strain CMCP6).